Consider the following 628-residue polypeptide: MSFSEFYQRSINEPEAFWAEQARRIDWRQPFTQTLDHSRPPFARWFCGGTTNLCHNAVDRWRDKQPEALALIAVSSETDEERTFTFSQLHDEVNIVAAMLLSLGVQRGDRVLVYMPMIAEAQITLLACARIGAIHSVVFGGFASHSVAARIDDARPALIVSADAGARGGKILPYKKLLDDAIAQAQHQPKHVLLVDRGLAKMAWVDGRDLDFATLRQQHLGASVPVAWLESNETSCILYTSGTTGKPKGVQRDVGGYAVALATSMDTIFGGKAGGVFFCASDIGWVVGHSYIVYAPLLAGMATIVYEGLPTYPDCGVWWKIVEKYQVNRMFSAPTAIRVLKKFPTAQIRNHDLSSLEALYLAGEPLDEPTASWVTETLGVPVIDNYWQTESGWPIMALARALDDRPSRLGSPGVPMYGYNVQLLNEVTGEPCGINEKGMLVIEGPLPPGCIQTIWGDDARFVKTYWSLFNRQVYATFDWGIRDAEGYYFILGRTDDVINIAGHRLGTREIEESISSYPNVAEVAVVGIKDALKGQVAVAFVIPKQSDTLADREAARDEENAIMALVDNQIGHFGRPAHVWFVSQLPKTRSGKMLRRTIQAICEGRDPGDLTTIDDPASLQQIRQAIEE.

It belongs to the ATP-dependent AMP-binding enzyme family.

It carries out the reaction propanoate + ATP + CoA = propanoyl-CoA + AMP + diphosphate. It participates in organic acid metabolism; propanoate degradation. Functionally, catalyzes the synthesis of propionyl-CoA from propionate and CoA. Also converts acetate to acetyl-CoA but with a lower specific activity. The sequence is that of Propionate--CoA ligase (prpE) from Salmonella typhimurium (strain LT2 / SGSC1412 / ATCC 700720).